The primary structure comprises 441 residues: Proline--tRNA ligase (441 aa).

Belongs to the class-II aminoacyl-tRNA synthetase family. ProS type 2 subfamily. As to quaternary structure, homodimer.

It localises to the cytoplasm. The enzyme catalyses tRNA(Pro) + L-proline + ATP = L-prolyl-tRNA(Pro) + AMP + diphosphate. In terms of biological role, catalyzes the attachment of proline to tRNA(Pro) in a two-step reaction: proline is first activated by ATP to form Pro-AMP and then transferred to the acceptor end of tRNA(Pro). The polypeptide is Proline--tRNA ligase (Afipia carboxidovorans (strain ATCC 49405 / DSM 1227 / KCTC 32145 / OM5) (Oligotropha carboxidovorans)).